The sequence spans 249 residues: 5'-nucleotidase SurE (249 aa).

The a divalent metal cation site is built by aspartate 9, aspartate 10, serine 40, and asparagine 92.

Belongs to the SurE nucleotidase family. A divalent metal cation is required as a cofactor.

It localises to the cytoplasm. The enzyme catalyses a ribonucleoside 5'-phosphate + H2O = a ribonucleoside + phosphate. Its function is as follows. Nucleotidase that shows phosphatase activity on nucleoside 5'-monophosphates. The chain is 5'-nucleotidase SurE from Shewanella putrefaciens (strain CN-32 / ATCC BAA-453).